The following is an 871-amino-acid chain: uncharacterized protein (871 aa).

11 helical membrane-spanning segments follow: residues 11 to 31, 92 to 112, 139 to 159, 380 to 400, 422 to 442, 475 to 495, 520 to 540, 562 to 582, 586 to 606, 629 to 649, and 653 to 673; these read AFVS…GLFL, YLFT…PILL, FYAH…IIYR, TILT…GCIS, LLGI…MSLV, VQVF…VQVI, FLLQ…TLLL, LSAP…TIMI, IIAP…YFAY, LFQV…LFVL, and WGAT…HLYF. Phosphoserine is present on residues Ser-725, Ser-726, Ser-727, Ser-729, Ser-737, and Ser-761. Positions 727-740 are enriched in polar residues; sequence SGSDEFLETSSRTS. The disordered stretch occupies residues 727-746; the sequence is SGSDEFLETSSRTSENTKEK.

This sequence belongs to the CSC1 (TC 1.A.17) family.

It is found in the golgi apparatus membrane. Functionally, acts as an osmosensitive calcium-permeable cation channel. This is an uncharacterized protein from Schizosaccharomyces pombe (strain 972 / ATCC 24843) (Fission yeast).